A 165-amino-acid chain; its full sequence is Nucleotide-binding protein Suden_0039 (165 aa).

The protein belongs to the YajQ family.

Functionally, nucleotide-binding protein. This is Nucleotide-binding protein Suden_0039 from Sulfurimonas denitrificans (strain ATCC 33889 / DSM 1251) (Thiomicrospira denitrificans (strain ATCC 33889 / DSM 1251)).